The sequence spans 35 residues: Unknown protein 14 from 2D-PAGE (35 aa).

Positions 1–35 (VVXXQTLXDXRGIYGDQGSIGPXXIXGLQGDRDAD) are disordered.

The sequence is that of Unknown protein 14 from 2D-PAGE from Bombyx mori (Silk moth).